A 236-amino-acid polypeptide reads, in one-letter code: Coat protein (236 aa).

The interval 1–27 is disordered; sequence MTTPANTTQAVGSTTSTTTTTAGATPA. Residues 7–27 show a composition bias toward low complexity; it reads TTQAVGSTTSTTTTTAGATPA.

The protein belongs to the potexvirus capsid protein family.

It is found in the virion. Its function is as follows. Required for genome encapsidation. Forms ribonucleoprotein complexes along with TGB1 helicase and viral RNA. This chain is Coat protein, found in Brassica campestris (Field mustard).